The primary structure comprises 459 residues: Ribulose bisphosphate carboxylase large chain (459 aa).

Lysine 4 carries the post-translational modification N6,N6,N6-trimethyllysine. Substrate-binding residues include asparagine 113 and threonine 163. Catalysis depends on lysine 165, which acts as the Proton acceptor. Lysine 167 contributes to the substrate binding site. The Mg(2+) site is built by lysine 191, aspartate 193, and glutamate 194. At lysine 191 the chain carries N6-carboxylysine. The active-site Proton acceptor is histidine 284. Substrate contacts are provided by arginine 285, histidine 317, and serine 369.

It belongs to the RuBisCO large chain family. Type I subfamily. As to quaternary structure, heterohexadecamer of 8 large chains and 8 small chains; disulfide-linked. The disulfide link is formed within the large subunit homodimers. It depends on Mg(2+) as a cofactor. Post-translationally, the disulfide bond which can form in the large chain dimeric partners within the hexadecamer appears to be associated with oxidative stress and protein turnover.

It localises to the plastid. The protein resides in the chloroplast. The enzyme catalyses 2 (2R)-3-phosphoglycerate + 2 H(+) = D-ribulose 1,5-bisphosphate + CO2 + H2O. It catalyses the reaction D-ribulose 1,5-bisphosphate + O2 = 2-phosphoglycolate + (2R)-3-phosphoglycerate + 2 H(+). Its function is as follows. RuBisCO catalyzes two reactions: the carboxylation of D-ribulose 1,5-bisphosphate, the primary event in carbon dioxide fixation, as well as the oxidative fragmentation of the pentose substrate in the photorespiration process. Both reactions occur simultaneously and in competition at the same active site. In Morus alba (White mulberry), this protein is Ribulose bisphosphate carboxylase large chain.